A 44-amino-acid polypeptide reads, in one-letter code: Antifungal protein R (44 aa).

The protein belongs to the thaumatin family.

Has antifungal activity. Inhibits the growth of Trichoderma viridae and Candida albicans. The polypeptide is Antifungal protein R (Hordeum vulgare (Barley)).